The sequence spans 254 residues: 5'-nucleotidase SurE (254 aa).

Aspartate 8, aspartate 9, serine 38, and asparagine 91 together coordinate a divalent metal cation.

The protein belongs to the SurE nucleotidase family. Requires a divalent metal cation as cofactor.

The protein localises to the cytoplasm. It carries out the reaction a ribonucleoside 5'-phosphate + H2O = a ribonucleoside + phosphate. Functionally, nucleotidase that shows phosphatase activity on nucleoside 5'-monophosphates. This chain is 5'-nucleotidase SurE, found in Anaeromyxobacter dehalogenans (strain 2CP-1 / ATCC BAA-258).